The chain runs to 204 residues: Guanylate kinase (204 aa).

In terms of domain architecture, Guanylate kinase-like spans 5–184; that stretch reads GLLLVLSGPS…AVDHIKSIVE (180 aa). 12-19 serves as a coordination point for ATP; it reads GPSGVGKG.

This sequence belongs to the guanylate kinase family.

It is found in the cytoplasm. The catalysed reaction is GMP + ATP = GDP + ADP. Functionally, essential for recycling GMP and indirectly, cGMP. In Lactobacillus johnsonii (strain CNCM I-12250 / La1 / NCC 533), this protein is Guanylate kinase.